The sequence spans 412 residues: Protein png-1 (412 aa).

Positions 150, 153, 182, and 185 each coordinate Zn(2+). Residues Ala363–Pro412 are disordered.

This sequence belongs to the transglutaminase-like superfamily. PNGase family.

This Neurospora crassa (strain ATCC 24698 / 74-OR23-1A / CBS 708.71 / DSM 1257 / FGSC 987) protein is Protein png-1 (un-7).